The following is a 195-amino-acid chain: Ribonuclease HII (195 aa).

The region spanning tryptophan 8–glycine 195 is the RNase H type-2 domain. A divalent metal cation is bound by residues aspartate 14, glutamate 15, and aspartate 106.

The protein belongs to the RNase HII family. Mn(2+) serves as cofactor. Mg(2+) is required as a cofactor.

The protein localises to the cytoplasm. The catalysed reaction is Endonucleolytic cleavage to 5'-phosphomonoester.. In terms of biological role, endonuclease that specifically degrades the RNA of RNA-DNA hybrids. The chain is Ribonuclease HII from Halorhodospira halophila (strain DSM 244 / SL1) (Ectothiorhodospira halophila (strain DSM 244 / SL1)).